Consider the following 265-residue polypeptide: 3-methyl-2-oxobutanoate hydroxymethyltransferase (265 aa).

Mg(2+) is bound by residues Asp44 and Asp83. Residues 44 to 45, Asp83, and Lys113 each bind 3-methyl-2-oxobutanoate; that span reads DS. Residue Glu115 participates in Mg(2+) binding. Catalysis depends on Glu183, which acts as the Proton acceptor.

It belongs to the PanB family. As to quaternary structure, homodecamer; pentamer of dimers. The cofactor is Mg(2+).

The protein localises to the cytoplasm. The catalysed reaction is 3-methyl-2-oxobutanoate + (6R)-5,10-methylene-5,6,7,8-tetrahydrofolate + H2O = 2-dehydropantoate + (6S)-5,6,7,8-tetrahydrofolate. It functions in the pathway cofactor biosynthesis; (R)-pantothenate biosynthesis; (R)-pantoate from 3-methyl-2-oxobutanoate: step 1/2. In terms of biological role, catalyzes the reversible reaction in which hydroxymethyl group from 5,10-methylenetetrahydrofolate is transferred onto alpha-ketoisovalerate to form ketopantoate. The protein is 3-methyl-2-oxobutanoate hydroxymethyltransferase of Leptospira borgpetersenii serovar Hardjo-bovis (strain L550).